The chain runs to 492 residues: ATP synthase subunit beta, plastid (492 aa).

ATP is bound at residue 170–177 (GGAGVGKT).

The protein belongs to the ATPase alpha/beta chains family. F-type ATPases have 2 components, CF(1) - the catalytic core - and CF(0) - the membrane proton channel. CF(1) has five subunits: alpha(3), beta(3), gamma(1), delta(1), epsilon(1). CF(0) has four main subunits: a(1), b(1), b'(1) and c(9-12).

It is found in the plastid membrane. It catalyses the reaction ATP + H2O + 4 H(+)(in) = ADP + phosphate + 5 H(+)(out). Its function is as follows. Produces ATP from ADP in the presence of a proton gradient across the membrane. The catalytic sites are hosted primarily by the beta subunits. The protein is ATP synthase subunit beta, plastid of Aneura mirabilis (Parasitic liverwort).